The following is a 351-amino-acid chain: DNA polymerase IV (351 aa).

A UmuC domain is found at 4–185; the sequence is IIHVDMDCFF…LPLAKIPGVG (182 aa). Mg(2+) contacts are provided by Asp8 and Asp103. Glu104 is an active-site residue.

It belongs to the DNA polymerase type-Y family. In terms of assembly, monomer. It depends on Mg(2+) as a cofactor.

It localises to the cytoplasm. It catalyses the reaction DNA(n) + a 2'-deoxyribonucleoside 5'-triphosphate = DNA(n+1) + diphosphate. Functionally, poorly processive, error-prone DNA polymerase involved in untargeted mutagenesis. Copies undamaged DNA at stalled replication forks, which arise in vivo from mismatched or misaligned primer ends. These misaligned primers can be extended by PolIV. Exhibits no 3'-5' exonuclease (proofreading) activity. May be involved in translesional synthesis, in conjunction with the beta clamp from PolIII. This Salmonella paratyphi B (strain ATCC BAA-1250 / SPB7) protein is DNA polymerase IV.